The sequence spans 758 residues: UPF0313 protein CV_1738 (758 aa).

The 266-residue stretch at 377–642 (AWEMIKYSVN…VDVVRDGYRR (266 aa)) folds into the Radical SAM core domain. The [4Fe-4S] cluster site is built by C391, C395, and C398. The disordered stretch occupies residues 698–758 (GAPMNRGKSP…KPGGKTSRSR (61 aa)). Positions 727–737 (RGQGGQGGRPG) are enriched in gly residues.

The protein belongs to the UPF0313 family. Requires [4Fe-4S] cluster as cofactor.

The protein is UPF0313 protein CV_1738 of Chromobacterium violaceum (strain ATCC 12472 / DSM 30191 / JCM 1249 / CCUG 213 / NBRC 12614 / NCIMB 9131 / NCTC 9757 / MK).